The primary structure comprises 432 residues: 2-oxoglutarate-dependent dioxygenase AOP2 (432 aa).

One can recognise a Fe2OG dioxygenase domain in the interval 281–378 (SGDDVEANDD…RYTAAIFTCP (98 aa)). Residues His301, Asp303, and His358 each contribute to the Fe cation site. Residue Arg369 participates in 2-oxoglutarate binding.

The protein belongs to the iron/ascorbate-dependent oxidoreductase family. It depends on Fe(2+) as a cofactor.

In terms of biological role, 2-oxoglutarate-dependent dioxygenase involved in glucosinolates biosynthesis. Catalyzes the conversion of methylsulfinylalkyl glucosinolates to alkenyl glucosinolates. The chain is 2-oxoglutarate-dependent dioxygenase AOP2 (AOP2) from Arabidopsis thaliana (Mouse-ear cress).